A 432-amino-acid polypeptide reads, in one-letter code: Aspartate aminotransferase (432 aa).

Residue 45-46 (RG) participates in substrate binding. 109–111 (SSL) is a pyridoxal 5'-phosphate binding site. 148-150 (YDR) provides a ligand contact to substrate. Pyridoxal 5'-phosphate contacts are provided by residues N197, Y229, and 262 to 265 (STSK). R400 lines the substrate pocket.

Belongs to the class-I pyridoxal-phosphate-dependent aminotransferase family. Homodimer. Pyridoxal 5'-phosphate serves as cofactor.

It carries out the reaction L-aspartate + 2-oxoglutarate = oxaloacetate + L-glutamate. This chain is Aspartate aminotransferase, found in Corynebacterium glutamicum (strain ATCC 13032 / DSM 20300 / JCM 1318 / BCRC 11384 / CCUG 27702 / LMG 3730 / NBRC 12168 / NCIMB 10025 / NRRL B-2784 / 534).